Reading from the N-terminus, the 1003-residue chain is MVTNSYMDTRSNLTSVNRGSNVDLEDRFQRELESLLQQHRNQQSFGRERERDIDVHRSGSAPPTVEGLLRAMDNQYLNNNNSDHRDVGNISSITTSNGVELLSDDELRWHPEYLSYYYSNEHSNPRLPPPLLSREDWRVAQRFHNSESVFDPVGEWRKKTVEVDNSSSLFSVQPGVPVEQAENDLMELRNAVAQGRSQKVQRLDQGREDLIGLSGYSGLGPRRKSFADILQEGLERDAALGSQLSRPASCNTFRDMKDAAVLSNFSAGGFDSPLAFHDSLHSTAKNSPNTMLGSTMSSPVPRNRTPDSHLVGRSTASGLPPIGTRVGPVEKKNTFGTAIQNCESYTAADVADTLSRLNMSEMSQVKENHMQSQLQVELENQSDVMRYIPNGHKKALRQQNTAETKDHLFSANYGGMSGYGASLGASTVGSHGQVNIPKRTSSSASLYSTSDHSRLGSVGLSDVNIRNGNINGTDFSTAGGYMAKNKLNSLAEHYSAEGSHLTGDGDRQSLNRLINQVASELHSPVMDPHYSQYLHTASSTAAPIDHSLIRNNFGTSNGDTANEYLAMLLAQNRQQLGNLNAANSRFFESPSYDLGNMYLGNHLPSPSKNSRNFQNMRMSQSASMMKVPFGGLQGSSHVDIGSTAEASLLEGFKNNKTRSLELSEIVGHVIEFSMDQYGSRFIQQKLETATDEEKNAIFPEILPYGRTLMTDVFGNYVIQKFFEHGTTKQRKELAEQVTGHVLALSLQMYGCRVIQKALEVVELEQQARMVKELDGSVMKCVHDQNGNHVIQKCIERLPQDWIQFIISSFYGKVLALSTHPYGCRVIQRVLEHIDDIETQRIIMEEIMDSVCTLAQDQYGNYVIQHIIQHGKPHERSEIINKLAGQIVKMSQQKFASNVVEKCLTFGGPEERQVLVNEMLGYTDENEPLQAMMKDPFGNYVVQKVLETCDDQSLALILSRIKVHLNALKRYTYGKHIVARVEKLITTGERRIGLSSSLAANTTP.

Residues 38-65 form a disordered region; it reads QHRNQQSFGRERERDIDVHRSGSAPPTV. A compositionally biased stretch (basic and acidic residues) spans 46-57; the sequence is GRERERDIDVHR. Ser225 carries the post-translational modification Phosphoserine. A compositionally biased stretch (polar residues) spans 285–300; the sequence is KNSPNTMLGSTMSSPV. The tract at residues 285-328 is disordered; sequence KNSPNTMLGSTMSSPVPRNRTPDSHLVGRSTASGLPPIGTRVGP. Position 305 is a phosphothreonine (Thr305). The 341-residue stretch at 644 to 984 folds into the PUM-HD domain; the sequence is AEASLLEGFK…HIVARVEKLI (341 aa). Pumilio repeat units lie at residues 664 to 699, 700 to 735, 736 to 771, 772 to 807, 808 to 843, 845 to 880, 881 to 916, and 917 to 958; these read EIVG…AIFP, EILP…ELAE, QVTG…RMVK, ELDG…FIIS, SFYG…RIIM, EIMD…EIIN, KLAG…VLVN, and EMLG…LILS.

It localises to the cytoplasm. Functionally, sequence-specific RNA-binding protein that regulates translation and mRNA stability by binding the 3'-UTR of target mRNAs. Binds the APUM-binding elements (APBEs) in the 3'-UTR mRNA sequence of CLV1, PNH, WUS and FAS2. In Arabidopsis thaliana (Mouse-ear cress), this protein is Pumilio homolog 4 (APUM4).